The primary structure comprises 52 residues: Conotoxin Cal9.2b (52 aa).

Residues 1 to 6 (KKGVTL) constitute a propeptide that is removed on maturation. 3 disulfide bridges follow: Cys14–Cys31, Cys19–Cys41, and Cys21–Cys46.

As to expression, expressed by the venom duct.

It localises to the secreted. Functionally, probable neurotoxin with unknown target. Possibly targets ion channels. In Californiconus californicus (California cone), this protein is Conotoxin Cal9.2b.